The chain runs to 175 residues: MSERIIMDEAAIQRTVTRMAHEILEYNKGTENLVLLGIKTRGEFLAIRIQDKINQIEQKIVPTGTIDITHFRDDIEIANKQITQDAIEIDADINDKVVIIIDDVLYTGRTVRASLDAILLHSRPIKIGLAALVDRGHRELPIRADFVGKNIPTSKEESVLVYLNEKDSQNAVIIE.

Substrate contacts are provided by residues 40–41, 102–110, Arg-135, and Val-159; these read TR and DDVLYTGRT. The PRPP-binding signature appears at 98–110; the sequence is VIIIDDVLYTGRT.

It belongs to the purine/pyrimidine phosphoribosyltransferase family. PyrR subfamily. Homodimer and homohexamer; in equilibrium.

It catalyses the reaction UMP + diphosphate = 5-phospho-alpha-D-ribose 1-diphosphate + uracil. Regulates transcriptional attenuation of the pyrimidine nucleotide (pyr) operon by binding in a uridine-dependent manner to specific sites on pyr mRNA. This disrupts an antiterminator hairpin in the RNA and favors formation of a downstream transcription terminator, leading to a reduced expression of downstream genes. In terms of biological role, also displays a weak uracil phosphoribosyltransferase activity which is not physiologically significant. The sequence is that of Bifunctional protein PyrR from Staphylococcus haemolyticus (strain JCSC1435).